Here is a 188-residue protein sequence, read N- to C-terminus: Elongation factor P (188 aa).

This sequence belongs to the elongation factor P family.

Its subcellular location is the cytoplasm. It functions in the pathway protein biosynthesis; polypeptide chain elongation. Its function is as follows. Involved in peptide bond synthesis. Stimulates efficient translation and peptide-bond synthesis on native or reconstituted 70S ribosomes in vitro. Probably functions indirectly by altering the affinity of the ribosome for aminoacyl-tRNA, thus increasing their reactivity as acceptors for peptidyl transferase. This Wolbachia sp. subsp. Brugia malayi (strain TRS) protein is Elongation factor P.